A 462-amino-acid chain; its full sequence is MAPGLPTAMDRPHFIGIGGAGMSGIAKILAQRGAEVAGSDAKESATADALRALGATVHIGHAAEHLAADASCVVVSSAIREDNPELVRAAELGIPVVHRSDALAALMNGLRPIAVAGTHGKTTTTSMLAVSLSELDLGPSYAIGGDLDAPGSNALHGEGEIFVAEADESDRSFHKYAPEVAIVLNVELDHHANYASMDEIYESFETFAGKIVPGGTLVIAADHEGARELTRRLAGRVRTVTYGESEDADVRILSVVPQGLKSEVTVVLDGAELTFAVSVPGRHYAHNAVAALAAGAALGVPAAELAPALAAYTGVKRRLQLKGEAAGVQVVDSYAHHPTEMTADLEAMRAAVGDARILVLFQPHLFSRTQELGKEMGQALALADASVVLDIYPAREDPIPGVTSELIVEAARAAGADVTPVHDKDASPALVAGMAKAGDLVLTMGAGDVTDLGPRILDELSK.

Residue 117 to 123 coordinates ATP; sequence GTHGKTT.

The protein belongs to the MurCDEF family.

The protein resides in the cytoplasm. The enzyme catalyses UDP-N-acetyl-alpha-D-muramate + L-alanine + ATP = UDP-N-acetyl-alpha-D-muramoyl-L-alanine + ADP + phosphate + H(+). The protein operates within cell wall biogenesis; peptidoglycan biosynthesis. Functionally, cell wall formation. This is UDP-N-acetylmuramate--L-alanine ligase from Streptomyces coelicolor (strain ATCC BAA-471 / A3(2) / M145).